A 142-amino-acid chain; its full sequence is Hemoglobin subunit alpha-A (142 aa).

The region spanning 2–142 is the Globin domain; sequence VLSAADKTNV…VGAVLTAKYR (141 aa). An O2-binding site is contributed by H59. H88 serves as a coordination point for heme b.

Belongs to the globin family. Heterotetramer of two alpha chains and two beta chains. Red blood cells.

Involved in oxygen transport from the lung to the various peripheral tissues. This chain is Hemoglobin subunit alpha-A (HBAA), found in Anas platyrhynchos platyrhynchos (Northern mallard).